Consider the following 34-residue polypeptide: Colipase (34 aa).

Cystine bridges form between C12/C23 and C18/C34.

It belongs to the colipase family. Forms a 1:1 stoichiometric complex with pancreatic lipase. Expressed by the pancreas.

Its subcellular location is the secreted. Functionally, colipase is a cofactor of pancreatic lipase. It allows the lipase to anchor itself to the lipid-water interface. Without colipase the enzyme is washed off by bile salts, which have an inhibitory effect on the lipase. This Gallus gallus (Chicken) protein is Colipase (CLPS).